We begin with the raw amino-acid sequence, 732 residues long: Asp/Glu-specific dipeptidyl-peptidase (732 aa).

An N-terminal signal peptide occupies residues 1-18 (MRIALVATLVLTSGIANA). Residues H80, D215, and S666 each act as charge relay system in the active site.

Belongs to the peptidase S46 family.

Catalyzes the removal of dipeptides from the N-terminus of oligopeptides. Shows a strict specificity for acidic residues (Asp or Glu) in the P1 position, and has probably a hydrophobic residue preference at the P2 position. Preferentially cleaves the synthetic substrate Leu-Glu-methylcoumaryl-7-amide (Leu-Glu-MCA) as compared to Leu-Asp-MCA. This Shewanella putrefaciens (strain CN-32 / ATCC BAA-453) protein is Asp/Glu-specific dipeptidyl-peptidase (dpp11).